A 704-amino-acid chain; its full sequence is Polyribonucleotide nucleotidyltransferase 4 (704 aa).

2 residues coordinate Mg(2+): Asp483 and Asp489. One can recognise a KH domain in the interval 550 to 609; the sequence is PRVLKMKIHPDKIRDVIGSGGKTINRIIDETGVKIDIDNDGTIFIAAESQEAVEKAIIII. The S1 motif domain occupies 619–687; the sequence is GQNYTGKVIK…QQGKINLSRK (69 aa).

This sequence belongs to the polyribonucleotide nucleotidyltransferase family. Requires Mg(2+) as cofactor.

It is found in the cytoplasm. It carries out the reaction RNA(n+1) + phosphate = RNA(n) + a ribonucleoside 5'-diphosphate. Functionally, involved in mRNA degradation. Catalyzes the phosphorolysis of single-stranded polyribonucleotides processively in the 3'- to 5'-direction. This Alkaliphilus metalliredigens (strain QYMF) protein is Polyribonucleotide nucleotidyltransferase 4.